The primary structure comprises 570 residues: Sulfite reductase [NADPH] hemoprotein beta-component (570 aa).

[4Fe-4S] cluster is bound by residues C434, C440, C479, and C483. C483 serves as a coordination point for siroheme.

The protein belongs to the nitrite and sulfite reductase 4Fe-4S domain family. Alpha(8)-beta(8). The alpha component is a flavoprotein, the beta component is a hemoprotein. Requires siroheme as cofactor. [4Fe-4S] cluster is required as a cofactor.

The catalysed reaction is hydrogen sulfide + 3 NADP(+) + 3 H2O = sulfite + 3 NADPH + 4 H(+). It functions in the pathway sulfur metabolism; hydrogen sulfide biosynthesis; hydrogen sulfide from sulfite (NADPH route): step 1/1. Its function is as follows. Component of the sulfite reductase complex that catalyzes the 6-electron reduction of sulfite to sulfide. This is one of several activities required for the biosynthesis of L-cysteine from sulfate. This Salmonella paratyphi A (strain ATCC 9150 / SARB42) protein is Sulfite reductase [NADPH] hemoprotein beta-component.